The chain runs to 89 residues: Small ribosomal subunit protein uS15 (89 aa).

Belongs to the universal ribosomal protein uS15 family. As to quaternary structure, part of the 30S ribosomal subunit. Forms a bridge to the 50S subunit in the 70S ribosome, contacting the 23S rRNA.

One of the primary rRNA binding proteins, it binds directly to 16S rRNA where it helps nucleate assembly of the platform of the 30S subunit by binding and bridging several RNA helices of the 16S rRNA. In terms of biological role, forms an intersubunit bridge (bridge B4) with the 23S rRNA of the 50S subunit in the ribosome. The polypeptide is Small ribosomal subunit protein uS15 (Rhodospirillum centenum (strain ATCC 51521 / SW)).